The following is a 271-amino-acid chain: 3-methyl-2-oxobutanoate hydroxymethyltransferase 1 (271 aa).

Residues Asp-53 and Asp-92 each contribute to the Mg(2+) site. 3-methyl-2-oxobutanoate is bound by residues 53–54, Asp-92, and Lys-120; that span reads DS. Position 122 (Glu-122) interacts with Mg(2+). The active-site Proton acceptor is the Glu-189.

The protein belongs to the PanB family. Homodecamer; pentamer of dimers. Mg(2+) is required as a cofactor.

It localises to the cytoplasm. It catalyses the reaction 3-methyl-2-oxobutanoate + (6R)-5,10-methylene-5,6,7,8-tetrahydrofolate + H2O = 2-dehydropantoate + (6S)-5,6,7,8-tetrahydrofolate. It functions in the pathway cofactor biosynthesis; (R)-pantothenate biosynthesis; (R)-pantoate from 3-methyl-2-oxobutanoate: step 1/2. Functionally, catalyzes the reversible reaction in which hydroxymethyl group from 5,10-methylenetetrahydrofolate is transferred onto alpha-ketoisovalerate to form ketopantoate. In Burkholderia cenocepacia (strain HI2424), this protein is 3-methyl-2-oxobutanoate hydroxymethyltransferase 1.